The following is a 214-amino-acid chain: Probable GTP-binding protein EngB (214 aa).

One can recognise an EngB-type G domain in the interval 25-203 (EGAEVAFAGR…EQVITGWLNL (179 aa)). GTP-binding positions include 33–40 (GRSNAGKS), 60–64 (GRTQL), 80–83 (DLPG), 147–150 (TKSD), and 182–184 (FSS). Ser40 and Thr62 together coordinate Mg(2+).

Belongs to the TRAFAC class TrmE-Era-EngA-EngB-Septin-like GTPase superfamily. EngB GTPase family. Requires Mg(2+) as cofactor.

In terms of biological role, necessary for normal cell division and for the maintenance of normal septation. The sequence is that of Probable GTP-binding protein EngB from Teredinibacter turnerae (strain ATCC 39867 / T7901).